The chain runs to 361 residues: S-adenosylmethionine decarboxylase proenzyme (361 aa).

Catalysis depends on residues Glu-11 and Glu-14. Residue Ser-71 is the Schiff-base intermediate with substrate; via pyruvic acid of the active site. Pyruvic acid (Ser); by autocatalysis is present on Ser-71. Cys-85 functions as the Proton donor; for catalytic activity in the catalytic mechanism. Catalysis depends on proton acceptor; for processing activity residues Ser-234 and His-247.

The protein belongs to the eukaryotic AdoMetDC family. Pyruvate serves as cofactor. In terms of processing, is synthesized initially as an inactive proenzyme. Formation of the active enzyme involves a self-maturation process in which the active site pyruvoyl group is generated from an internal serine residue via an autocatalytic post-translational modification. Two non-identical subunits are generated from the proenzyme in this reaction, and the pyruvate is formed at the N-terminus of the alpha chain, which is derived from the carboxyl end of the proenzyme. The post-translation cleavage follows an unusual pathway, termed non-hydrolytic serinolysis, in which the side chain hydroxyl group of the serine supplies its oxygen atom to form the C-terminus of the beta chain, while the remainder of the serine residue undergoes an oxidative deamination to produce ammonia and the pyruvoyl group blocking the N-terminus of the alpha chain.

It catalyses the reaction S-adenosyl-L-methionine + H(+) = S-adenosyl 3-(methylsulfanyl)propylamine + CO2. It participates in amine and polyamine biosynthesis; S-adenosylmethioninamine biosynthesis; S-adenosylmethioninamine from S-adenosyl-L-methionine: step 1/1. The chain is S-adenosylmethionine decarboxylase proenzyme (SAMDC) from Daucus carota (Wild carrot).